The chain runs to 230 residues: Ribonuclease 3 (230 aa).

In terms of domain architecture, RNase III spans 7–134 (LEELESKLGI…VIAAIYLDKG (128 aa)). Mg(2+) is bound at residue glutamate 47. Aspartate 51 is a catalytic residue. 2 residues coordinate Mg(2+): aspartate 120 and glutamate 123. The active site involves glutamate 123. Residues 161–230 (DYKTRLQEIL…ACKALKGLDN (70 aa)) form the DRBM domain.

It belongs to the ribonuclease III family. In terms of assembly, homodimer. The cofactor is Mg(2+).

The protein localises to the cytoplasm. It carries out the reaction Endonucleolytic cleavage to 5'-phosphomonoester.. Its function is as follows. Digests double-stranded RNA. Involved in the processing of primary rRNA transcript to yield the immediate precursors to the large and small rRNAs (23S and 16S). Processes some mRNAs, and tRNAs when they are encoded in the rRNA operon. Processes pre-crRNA and tracrRNA of type II CRISPR loci if present in the organism. The protein is Ribonuclease 3 of Clostridium acetobutylicum (strain ATCC 824 / DSM 792 / JCM 1419 / IAM 19013 / LMG 5710 / NBRC 13948 / NRRL B-527 / VKM B-1787 / 2291 / W).